The sequence spans 403 residues: Alkaline protease 1 (403 aa).

The first 21 residues, 1 to 21 (MQSIKRTLLLLGALLPAALAA), serve as a signal peptide directing secretion. A propeptide spanning residues 22–125 (PAREPHPSSN…QIWYLDALTT (104 aa)) is cleaved from the precursor. Positions 36 to 120 (KYIITFKSGI…HVEEDQIWYL (85 aa)) constitute an Inhibitor I9 domain. The 274-residue stretch at 130–403 (PWGLGSISHK…PNKLAYNGAA (274 aa)) folds into the Peptidase S8 domain. Residues Asp-162 and His-193 each act as charge relay system in the active site. 2 N-linked (GlcNAc...) asparagine glycosylation sites follow: Asn-253 and Asn-307. The active-site Charge relay system is Ser-349.

It belongs to the peptidase S8 family.

Its subcellular location is the secreted. The catalysed reaction is Hydrolysis of proteins with broad specificity, and of Bz-Arg-OEt &gt; Ac-Tyr-OEt. Does not hydrolyze peptide amides.. Secreted alkaline protease that allows assimilation of proteinaceous substrates. The protein is Alkaline protease 1 (alp1) of Aspergillus clavatus (strain ATCC 1007 / CBS 513.65 / DSM 816 / NCTC 3887 / NRRL 1 / QM 1276 / 107).